Here is a 182-residue protein sequence, read N- to C-terminus: tRNA-splicing endonuclease (182 aa).

Catalysis depends on residues tyrosine 119, histidine 127, and lysine 158.

It belongs to the tRNA-intron endonuclease family. Archaeal short subfamily. As to quaternary structure, homotetramer; although the tetramer contains four active sites, only two participate in the cleavage. Therefore, it should be considered as a dimer of dimers.

The catalysed reaction is pretRNA = a 3'-half-tRNA molecule with a 5'-OH end + a 5'-half-tRNA molecule with a 2',3'-cyclic phosphate end + an intron with a 2',3'-cyclic phosphate and a 5'-hydroxyl terminus.. In terms of biological role, endonuclease that removes tRNA introns. Cleaves pre-tRNA at the 5'- and 3'-splice sites to release the intron. The products are an intron and two tRNA half-molecules bearing 2',3' cyclic phosphate and 5'-OH termini. Recognizes a pseudosymmetric substrate in which 2 bulged loops of 3 bases are separated by a stem of 4 bp. The sequence is that of tRNA-splicing endonuclease from Saccharolobus islandicus (strain L.S.2.15 / Lassen #1) (Sulfolobus islandicus).